Reading from the N-terminus, the 490-residue chain is Glutamyl-tRNA(Gln) amidotransferase subunit A (490 aa).

Active-site charge relay system residues include Lys-78 and Ser-158. The segment at 131–159 (SNETSRFGPPINPWRRKGDNAGLTPGGSS) is disordered. The active-site Acyl-ester intermediate is the Ser-182.

It belongs to the amidase family. GatA subfamily. Heterotrimer of A, B and C subunits.

The catalysed reaction is L-glutamyl-tRNA(Gln) + L-glutamine + ATP + H2O = L-glutaminyl-tRNA(Gln) + L-glutamate + ADP + phosphate + H(+). Its function is as follows. Allows the formation of correctly charged Gln-tRNA(Gln) through the transamidation of misacylated Glu-tRNA(Gln) in organisms which lack glutaminyl-tRNA synthetase. The reaction takes place in the presence of glutamine and ATP through an activated gamma-phospho-Glu-tRNA(Gln). The polypeptide is Glutamyl-tRNA(Gln) amidotransferase subunit A (Hyphomonas neptunium (strain ATCC 15444)).